We begin with the raw amino-acid sequence, 210 residues long: Leucyl/phenylalanyl-tRNA--protein transferase (210 aa).

The protein belongs to the L/F-transferase family.

It localises to the cytoplasm. The catalysed reaction is N-terminal L-lysyl-[protein] + L-leucyl-tRNA(Leu) = N-terminal L-leucyl-L-lysyl-[protein] + tRNA(Leu) + H(+). It carries out the reaction N-terminal L-arginyl-[protein] + L-leucyl-tRNA(Leu) = N-terminal L-leucyl-L-arginyl-[protein] + tRNA(Leu) + H(+). The enzyme catalyses L-phenylalanyl-tRNA(Phe) + an N-terminal L-alpha-aminoacyl-[protein] = an N-terminal L-phenylalanyl-L-alpha-aminoacyl-[protein] + tRNA(Phe). Functions in the N-end rule pathway of protein degradation where it conjugates Leu, Phe and, less efficiently, Met from aminoacyl-tRNAs to the N-termini of proteins containing an N-terminal arginine or lysine. The polypeptide is Leucyl/phenylalanyl-tRNA--protein transferase (Ruegeria pomeroyi (strain ATCC 700808 / DSM 15171 / DSS-3) (Silicibacter pomeroyi)).